A 63-amino-acid polypeptide reads, in one-letter code: Large ribosomal subunit protein uL30 (63 aa).

This sequence belongs to the universal ribosomal protein uL30 family. Part of the 50S ribosomal subunit.

The sequence is that of Large ribosomal subunit protein uL30 from Rickettsia peacockii (strain Rustic).